The primary structure comprises 270 residues: Esterase (270 aa).

Catalysis depends on charge relay system residues Ser127, Asp216, and His244.

The protein belongs to the LovG family.

It participates in mycotoxin biosynthesis. In terms of biological role, esterase; part of the gene cluster that mediates the biosynthesis of the selective antifungal agent ascochitine, an o-quinone methide that plays a possible protective role against other microbial competitors in nature and is considered to be important for pathogenicity of legume-associated Didymella species. The pathway probably begins with the synthesis of a keto-aldehyde intermediate by the ascochitine non-reducing polyketide synthase pksAC from successive condensations of 4 malonyl-CoA units, presumably with a simple acetyl-CoA starter unit. Release of the keto-aldehyde intermediate is consistent with the presence of the C-terminal reductive release domain. The HR-PKS (orf7) probably makes a diketide starter unit which is passed to the non-reducing polyketide synthase pksAC for further extension, producing ascochital and ascochitine. The aldehyde dehydrogenase (orf1), the 2-oxoglutarate-dependent dioxygenase (orf3) and the dehydrogenase (orf9) are probably involved in subsequent oxidations of methyl groups to the carboxylic acid of the heterocyclic ring. The ascochitine gene cluster also includes a gene encoding a short peptide with a cupin domain (orf2) that is often found in secondary metabolite gene clusters and which function has still to be determined. The chain is Esterase from Didymella fabae (Leaf and pod spot disease fungus).